Here is a 332-residue protein sequence, read N- to C-terminus: Casein kinase II subunit alpha (332 aa).

In terms of domain architecture, Protein kinase spans Y34–F319. ATP-binding positions include V40–V48 and K63. The Proton acceptor role is filled by D151.

This sequence belongs to the protein kinase superfamily. Ser/Thr protein kinase family. CK2 subfamily. As to quaternary structure, tetramer of two alpha and two beta chains (possible).

It carries out the reaction L-seryl-[protein] + ATP = O-phospho-L-seryl-[protein] + ADP + H(+). The catalysed reaction is L-threonyl-[protein] + ATP = O-phospho-L-threonyl-[protein] + ADP + H(+). Casein kinases are operationally defined by their preferential utilization of acidic proteins such as caseins as substrates. The alpha chain contains the catalytic site. The chain is Casein kinase II subunit alpha (ACK2) from Zea mays (Maize).